The primary structure comprises 374 residues: Chaperone protein DnaJ (374 aa).

Residues 5–70 (DYYEILGVSR…QKRAAYDQYG (66 aa)) form the J domain. The segment at 129 to 207 (GVTREIRIPT…CHGHGRVEKS (79 aa)) adopts a CR-type zinc-finger fold. Zn(2+) is bound by residues Cys-142, Cys-145, Cys-159, Cys-162, Cys-181, Cys-184, Cys-195, and Cys-198. 4 CXXCXGXG motif repeats span residues 142-149 (CDVCHGSG), 159-166 (CPTCHGQG), 181-188 (CPTCQGQG), and 195-202 (CTKCHGHG).

It belongs to the DnaJ family. Homodimer. Requires Zn(2+) as cofactor.

It is found in the cytoplasm. Functionally, participates actively in the response to hyperosmotic and heat shock by preventing the aggregation of stress-denatured proteins and by disaggregating proteins, also in an autonomous, DnaK-independent fashion. Unfolded proteins bind initially to DnaJ; upon interaction with the DnaJ-bound protein, DnaK hydrolyzes its bound ATP, resulting in the formation of a stable complex. GrpE releases ADP from DnaK; ATP binding to DnaK triggers the release of the substrate protein, thus completing the reaction cycle. Several rounds of ATP-dependent interactions between DnaJ, DnaK and GrpE are required for fully efficient folding. Also involved, together with DnaK and GrpE, in the DNA replication of plasmids through activation of initiation proteins. The protein is Chaperone protein DnaJ of Sodalis glossinidius (strain morsitans).